The primary structure comprises 257 residues: 1-(5-phosphoribosyl)-5-[(5-phosphoribosylamino)methylideneamino] imidazole-4-carboxamide isomerase (257 aa).

Aspartate 8 acts as the Proton acceptor in catalysis. Aspartate 129 serves as the catalytic Proton donor.

Belongs to the HisA/HisF family.

It localises to the cytoplasm. The catalysed reaction is 1-(5-phospho-beta-D-ribosyl)-5-[(5-phospho-beta-D-ribosylamino)methylideneamino]imidazole-4-carboxamide = 5-[(5-phospho-1-deoxy-D-ribulos-1-ylimino)methylamino]-1-(5-phospho-beta-D-ribosyl)imidazole-4-carboxamide. The protein operates within amino-acid biosynthesis; L-histidine biosynthesis; L-histidine from 5-phospho-alpha-D-ribose 1-diphosphate: step 4/9. The sequence is that of 1-(5-phosphoribosyl)-5-[(5-phosphoribosylamino)methylideneamino] imidazole-4-carboxamide isomerase from Acaryochloris marina (strain MBIC 11017).